We begin with the raw amino-acid sequence, 229 residues long: General odorant-binding protein 69 (229 aa).

The signal sequence occupies residues 1 to 20 (MDRLLLVLLSSASLLLTVYG). A disulfide bridge links Cys-66 with Cys-106.

This sequence belongs to the PBP/GOBP family.

The protein resides in the secreted. Its function is as follows. Present in the aqueous fluid surrounding olfactory sensory dendrites and are thought to aid in the capture and transport of hydrophobic odorants into and through this fluid. In Anopheles gambiae (African malaria mosquito), this protein is General odorant-binding protein 69 (Obp69).